The sequence spans 987 residues: ATP-dependent 6-phosphofructokinase subunit alpha (987 aa).

The N-terminal catalytic PFK domain 1 stretch occupies residues 1–580 (MQSQDSCYGV…LYENFLSTTV (580 aa)). Serine 3 carries the phosphoserine modification. Lysine 89 participates in a covalent cross-link: Glycyl lysine isopeptide (Lys-Gly) (interchain with G-Cter in ubiquitin). 5 positions are modified to phosphoserine: serine 166, serine 179, serine 185, serine 189, and serine 192. An ATP-binding site is contributed by glycine 215. Serine 217 carries the post-translational modification Phosphoserine. ATP is bound by residues 278 to 279 (RS) and 308 to 311 (GDGS). Aspartate 309 is a Mg(2+) binding site. Beta-D-fructose 6-phosphate is bound by residues 354 to 356 (SID), arginine 391, and 398 to 400 (MGR). Aspartate 356 serves as the catalytic Proton acceptor. Phosphothreonine is present on threonine 450. Beta-D-fructose 6-phosphate is bound by residues glutamate 455, lysine 482, and 488-491 (HVQR). Residues 581–594 (KDDGSELLPVSDRL) are interdomain linker. A C-terminal regulatory PFK domain 2 region spans residues 595–987 (NIGIVHVGAP…EVAALAAENK (393 aa)). A Glycyl lysine isopeptide (Lys-Gly) (interchain with G-Cter in ubiquitin) cross-link involves residue lysine 625. Beta-D-fructose 2,6-bisphosphate is bound by residues arginine 665, 722 to 726 (TVSNN), arginine 760, 767 to 769 (QGG), glutamate 827, arginine 853, 859 to 862 (HVQQ), and arginine 952.

This sequence belongs to the phosphofructokinase type A (PFKA) family. ATP-dependent PFK group I subfamily. Eukaryotic two domain clade 'E' sub-subfamily. Heterooctamer of 4 alpha and 4 beta chains. Mg(2+) serves as cofactor.

The protein resides in the cytoplasm. It localises to the mitochondrion outer membrane. The catalysed reaction is beta-D-fructose 6-phosphate + ATP = beta-D-fructose 1,6-bisphosphate + ADP + H(+). It functions in the pathway carbohydrate degradation; glycolysis; D-glyceraldehyde 3-phosphate and glycerone phosphate from D-glucose: step 3/4. With respect to regulation, allosterically activated by ADP, AMP, or fructose 2,6-bisphosphate, and allosterically inhibited by ATP or citrate. Catalyzes the phosphorylation of D-fructose 6-phosphate to fructose 1,6-bisphosphate by ATP, the first committing step of glycolysis. In Saccharomyces cerevisiae (strain ATCC 204508 / S288c) (Baker's yeast), this protein is ATP-dependent 6-phosphofructokinase subunit alpha (PFK1).